A 295-amino-acid chain; its full sequence is Acetylglutamate kinase (295 aa).

Substrate contacts are provided by residues 66 to 67 (GG), Arg88, and Asn193.

This sequence belongs to the acetylglutamate kinase family. ArgB subfamily.

It is found in the cytoplasm. It catalyses the reaction N-acetyl-L-glutamate + ATP = N-acetyl-L-glutamyl 5-phosphate + ADP. Its pathway is amino-acid biosynthesis; L-arginine biosynthesis; N(2)-acetyl-L-ornithine from L-glutamate: step 2/4. Catalyzes the ATP-dependent phosphorylation of N-acetyl-L-glutamate. This chain is Acetylglutamate kinase, found in Rhizobium rhizogenes (strain K84 / ATCC BAA-868) (Agrobacterium radiobacter).